Reading from the N-terminus, the 326-residue chain is G-protein coupled receptor 171 (326 aa).

Topologically, residues 1–19 are extracellular; it reads MTNSSMFCPIYRDLEPFTY. The helical transmembrane segment at 20-40 threads the bilayer; it reads FFYLVYLIGIIGSCFATWAFI. The Cytoplasmic portion of the chain corresponds to 41–48; it reads QKSTNHRC. Residues 49 to 69 form a helical membrane-spanning segment; it reads VSIYLINLLTADFLLTLALPV. The Extracellular portion of the chain corresponds to 70–89; the sequence is KIVVDLGVAPWKLRIFHCQV. An intrachain disulfide couples C87 to C165. A helical transmembrane segment spans residues 90–110; the sequence is TACLIYINMYLSIIFLAFVSI. At 111-133 the chain is on the cytoplasmic side; the sequence is DRCLQLVHSCKIYRIQEPGFAKM. The helical transmembrane segment at 134–154 threads the bilayer; sequence ISAVVWLMVLLIMVPNMVIPI. The Extracellular segment spans residues 155–182; that stretch reads KNIKEKSNVGCMEFKREFGKNWHLLTNF. The chain crosses the membrane as a helical span at residues 183-203; sequence ICVAIFLNFSAIILISNFLVI. Residues 204 to 221 lie on the Cytoplasmic side of the membrane; the sequence is RQLYRNRDNANYPSVKSA. Residues 222–242 form a helical membrane-spanning segment; sequence LLNILLVTASYIICFVPYHAV. The Extracellular portion of the chain corresponds to 243 to 268; it reads RIPYTLSQTEVISDCSTRIALFKAKE. The helical transmembrane segment at 269–289 threads the bilayer; it reads ATLLLAVSNLCFDPILYYHLS. The Cytoplasmic portion of the chain corresponds to 290 to 326; the sequence is KAFRLKVTETFASPQKMKAREEKPRRENDVQSTGSAC. Residues 305-326 are disordered; that stretch reads KMKAREEKPRRENDVQSTGSAC. The span at 307–318 shows a compositional bias: basic and acidic residues; it reads KAREEKPRREND.

It belongs to the G-protein coupled receptor 1 family.

It is found in the cell membrane. Its function is as follows. G-protein coupled receptor for Big LEN, a 16-amino acid neuropeptide produced from the precursor protein, proSAAS (encoded by PCSK1N). Acts through a G(i)-alpha-mediated pathway in response to Big LEN. Big LEN-GPR171 system plays an important role in regulating feeding and metabolism. Also plays a role in modulating fear and anxiety-like behaviors in the basolateral amygdala. Big LEN-GPR171 modulates the mu-type opioid receptor signaling and antinociception. Acts as a negative regulator T cell function. The chain is G-protein coupled receptor 171 from Rattus norvegicus (Rat).